A 398-amino-acid chain; its full sequence is Inner membrane protein YjgN (398 aa).

The Cytoplasmic portion of the chain corresponds to methionine 1–tyrosine 24. A helical membrane pass occupies residues phenylalanine 25–tryptophan 45. The Periplasmic portion of the chain corresponds to alanine 46–asparagine 73. A helical transmembrane segment spans residues valine 74–alanine 94. Aspartate 95 is a topological domain (cytoplasmic). A helical transmembrane segment spans residues methionine 96–alanine 116. Residues lysine 117 to phenylalanine 142 lie on the Periplasmic side of the membrane. A helical transmembrane segment spans residues tryptophan 143–isoleucine 163. The Cytoplasmic segment spans residues serine 164–serine 175. Residues valine 176–glycine 196 traverse the membrane as a helical segment. Residues threonine 197 to lysine 228 are Periplasmic-facing. A helical membrane pass occupies residues tyrosine 229–phenylalanine 249. At aspartate 250–lysine 278 the chain is on the cytoplasmic side. The chain crosses the membrane as a helical span at residues methionine 279–valine 299. Over serine 300–alanine 333 the chain is Periplasmic. A helical transmembrane segment spans residues leucine 334–isoleucine 354. The Cytoplasmic segment spans residues aspartate 355–leucine 398.

Its subcellular location is the cell inner membrane. The chain is Inner membrane protein YjgN (yjgN) from Escherichia coli (strain K12).